Here is a 920-residue protein sequence, read N- to C-terminus: 2-oxoadipate dehydrogenase complex component E1 (920 aa).

Residues Lys-183 and Lys-188 each carry the N6-succinyllysine modification. Residues 299–318 (GKTRGRQQSQEDGDYSPNGS) are disordered. An N6-succinyllysine mark is found at Lys-800 and Lys-818.

The protein belongs to the alpha-ketoglutarate dehydrogenase family. The 2-oxoadipate dehydrogenase complex is composed of OADH (2-oxoadipate dehydrogenase; E1a), DLST (dihydrolipoamide succinyltransferase; E2) and DLD (dihydrolipoamide dehydrogenase; E3). E1a functional unit is a dimer. Thiamine diphosphate is required as a cofactor.

The protein resides in the mitochondrion. It catalyses the reaction N(6)-[(R)-lipoyl]-L-lysyl-[protein] + 2-oxoadipate + H(+) = N(6)-[(R)-S(8)-glutaryldihydrolipoyl]-L-lysyl-[protein] + CO2. The protein operates within amino-acid degradation. In terms of biological role, 2-oxoadipate dehydrogenase (E1a) component of the 2-oxoadipate dehydrogenase complex (OADHC). Participates in the first step, rate limiting for the overall conversion of 2-oxoadipate (alpha-ketoadipate) to glutaryl-CoA and CO(2) catalyzed by the whole OADHC. Catalyzes the irreversible decarboxylation of 2-oxoadipate via the thiamine diphosphate (ThDP) cofactor and subsequent transfer of the decarboxylated acyl intermediate on an oxidized dihydrolipoyl group that is covalently amidated to the E2 enzyme (dihydrolipoyllysine-residue succinyltransferase or DLST). Can catalyze the decarboxylation of 2-oxoglutarate in vitro, but at a much lower rate than 2-oxoadipate. Responsible for the last step of L-lysine, L-hydroxylysine and L-tryptophan catabolism with the common product being 2-oxoadipate. The chain is 2-oxoadipate dehydrogenase complex component E1 (Dhtkd1) from Rattus norvegicus (Rat).